Reading from the N-terminus, the 132-residue chain is Small ribosomal subunit protein uS11 (132 aa).

It belongs to the universal ribosomal protein uS11 family. As to quaternary structure, part of the 30S ribosomal subunit. Interacts with proteins S7 and S18. Binds to IF-3.

Its function is as follows. Located on the platform of the 30S subunit, it bridges several disparate RNA helices of the 16S rRNA. Forms part of the Shine-Dalgarno cleft in the 70S ribosome. The chain is Small ribosomal subunit protein uS11 from Cupriavidus pinatubonensis (strain JMP 134 / LMG 1197) (Cupriavidus necator (strain JMP 134)).